The primary structure comprises 309 residues: Mitochondrial substrate carrier family protein ancA (309 aa).

Solcar repeat units follow at residues 10-102 (SSFV…YKKF), 114-203 (KFFI…AKGI), and 216-299 (ASWG…IQKL). The next 5 membrane-spanning stretches (helical) occupy residues 12–41 (FVKD…LLLQ), 79–103 (LANV…KKFF), 113–133 (TKFF…SLLF), 181–201 (VSVG…DTAK), and 215–235 (WASW…SYPF). Positions 84 and 96 each coordinate ADP. Arg239 is an ADP binding site. The tract at residues 239–244 (RRRMMM) is important for transport activity. Positions 239–244 (RRRMMM) match the Nucleotide carrier signature motif motif. A helical membrane pass occupies residues 276–293 (ALSNAIRGSGGALVLVIY).

It belongs to the mitochondrial carrier (TC 2.A.29) family. In terms of assembly, monomer.

It localises to the mitochondrion inner membrane. It carries out the reaction ADP(in) + ATP(out) = ADP(out) + ATP(in). The matrix-open state (m-state) is inhibited by the membrane-permeable bongkrekic acid (BKA). The cytoplasmic-open state (c-state) is inhibited by the membrane-impermeable toxic inhibitor carboxyatractyloside (CATR). Its function is as follows. ADP:ATP antiporter that mediates import of ADP into the mitochondrial matrix for ATP synthesis, and export of ATP out to fuel the cell. Cycles between the cytoplasmic-open state (c-state) and the matrix-open state (m-state): operates by the alternating access mechanism with a single substrate-binding site intermittently exposed to either the cytosolic (c-state) or matrix (m-state) side of the inner mitochondrial membrane. This chain is Mitochondrial substrate carrier family protein ancA (ancA), found in Dictyostelium discoideum (Social amoeba).